Consider the following 124-residue polypeptide: Holo-[acyl-carrier-protein] synthase (124 aa).

Positions 5 and 56 each coordinate Mg(2+).

The protein belongs to the P-Pant transferase superfamily. AcpS family. Requires Mg(2+) as cofactor.

Its subcellular location is the cytoplasm. It carries out the reaction apo-[ACP] + CoA = holo-[ACP] + adenosine 3',5'-bisphosphate + H(+). Its function is as follows. Transfers the 4'-phosphopantetheine moiety from coenzyme A to a Ser of acyl-carrier-protein. This chain is Holo-[acyl-carrier-protein] synthase, found in Campylobacter hominis (strain ATCC BAA-381 / DSM 21671 / CCUG 45161 / LMG 19568 / NCTC 13146 / CH001A).